Here is a 704-residue protein sequence, read N- to C-terminus: Nucleolar and coiled-body phosphoprotein 1 (704 aa).

Residues 10 to 42 enclose the LisH domain; sequence VPSDLYPLVLGFLRDNQLSEVASKFAKATGATQ. An N6-acetyllysine modification is found at Lys33. The interval 65-638 is disordered; sequence KVKLQSNGPV…PFRRVREEEI (574 aa). Residues Lys67 and Lys76 each participate in a glycyl lysine isopeptide (Lys-Gly) (interchain with G-Cter in SUMO2) cross-link. Acidic serine cluster repeat units follow at residues 84 to 95 and 127 to 138; these read SSDSSEDSSEEE and ESSSSEESSEEE. The interval 84–570 is 11 X 12 AA approximate repeats of an acidic serine cluster; sequence SSDSSEDSSE…GKAGKESEEE (487 aa). A phosphoserine mark is found at Ser87, Ser88, Ser91, and Ser92. Positions 87 to 96 are enriched in acidic residues; it reads SSEDSSEEED. Diphosphoserine occurs at positions 88 and 91. Low complexity-rich tracts occupy residues 120-132 and 149-160; these read KAAA…SSSE and QQKAVKPQAKAV. Residues 170–181 form an Acidic serine cluster 3 repeat; the sequence is SESESDSSSEDE. A compositionally biased stretch (acidic residues) spans 170 to 182; it reads SESESDSSSEDEA. 3 stretches are compositionally biased toward low complexity: residues 183 to 207, 215 to 236, and 246 to 279; these read PQTQ…KAPA, AQPK…SSSS, and AAPL…SSED. Glycyl lysine isopeptide (Lys-Gly) (interchain with G-Cter in SUMO2) cross-links involve residues Lys189 and Lys200. Acidic serine cluster repeat units lie at residues 231–242, 274–285, and 335–346; these read SSSSSSDDSEEE, SSSSEDSSSEEE, and SSEESDSSSEEE. Residues Lys352 and Lys357 each participate in a glycyl lysine isopeptide (Lys-Gly) (interchain with G-Cter in SUMO2) cross-link. Phosphoserine is present on residues Ser372, Ser373, and Ser376. The Acidic serine cluster 7 repeat unit spans residues 373 to 384; it reads SDSSDSDSSEDE. Residues Lys399, Lys405, Lys410, and Lys416 each participate in a glycyl lysine isopeptide (Lys-Gly) (interchain with G-Cter in SUMO2) cross-link. Positions 408 to 419 are enriched in low complexity; sequence AAKAVATPKQPA. An N6-acetyllysine; alternate modification is found at Lys424. Residue Lys424 forms a Glycyl lysine isopeptide (Lys-Gly) (interchain with G-Cter in SUMO1); alternate linkage. Residue Lys424 forms a Glycyl lysine isopeptide (Lys-Gly) (interchain with G-Cter in SUMO2); alternate linkage. Residues 434 to 444 are compositionally biased toward acidic residues; the sequence is SSEEESSSSEE. One copy of the Acidic serine cluster 8 repeat lies at 434 to 445; that stretch reads SSEEESSSSEEE. Glycyl lysine isopeptide (Lys-Gly) (interchain with G-Cter in SUMO2) cross-links involve residues Lys449 and Lys461. Ser465 bears the Phosphoserine mark. Low complexity-rich tracts occupy residues 474–485 and 504–529; these read AGGDSSSDSESS and AGAA…SSSE. Residues 479–490 form an Acidic serine cluster 9 repeat; sequence SSDSESSSSEEE. Lys510 participates in a covalent cross-link: Glycyl lysine isopeptide (Lys-Gly) (interchain with G-Cter in SUMO2). Acidic serine cluster repeat units follow at residues 524-535 and 559-570; these read SSSSSEDSSEEE and QNGKAGKESEEE. At Ser567 the chain carries Phosphoserine. Lys584 participates in a covalent cross-link: Glycyl lysine isopeptide (Lys-Gly) (interchain with G-Cter in SUMO2). Ser587 bears the Phosphoserine mark. Phosphothreonine is present on Thr596. Residue Lys609 forms a Glycyl lysine isopeptide (Lys-Gly) (interchain with G-Cter in SUMO2) linkage. A phosphothreonine mark is found at Thr612 and Thr615. A Glycyl lysine isopeptide (Lys-Gly) (interchain with G-Cter in SUMO2) cross-link involves residue Lys618. Phosphoserine occurs at positions 627 and 648. Residue Lys652 forms a Glycyl lysine isopeptide (Lys-Gly) (interchain with G-Cter in SUMO2) linkage. At Lys668 the chain carries N6-acetyllysine; alternate. Lys668 is covalently cross-linked (Glycyl lysine isopeptide (Lys-Gly) (interchain with G-Cter in SUMO2); alternate). Arg688 bears the Omega-N-methylarginine mark. Residue Ser691 is modified to Phosphoserine. Lys700 is covalently cross-linked (Glycyl lysine isopeptide (Lys-Gly) (interchain with G-Cter in SUMO2)). The residue at position 703 (Ser703) is a Phosphoserine.

This sequence belongs to the NOLC1 family. Interacts with RNA polymerase I 194 kDa subunit (RPA194) and with casein kinase-II. Interacts with DKC1/NAP57, NOP58 and fibrillarin. Post-translationally, undergoes rapid and massive phosphorylation/dephosphorylation cycles on CK2 and PKC sites. NOLC1 is one of the mostly phosphorylated proteins in the cell. Ubiquitinated. Monoubiquitination by the BCR(KBTBD8) complex promotes the formation of a NOLC1-TCOF1 complex that acts as a platform to connect RNA polymerase I with enzymes responsible for ribosomal processing and modification, leading to remodel the translational program of differentiating cells in favor of neural crest specification. In terms of processing, pyrophosphorylated by 5-diphosphoinositol pentakisphosphate (5-IP7). Serine pyrophosphorylation is achieved by Mg(2+)-dependent, but enzyme independent transfer of a beta-phosphate from a inositol pyrophosphate to a pre-phosphorylated serine residue.

Its subcellular location is the cytoplasm. It localises to the nucleus. The protein resides in the nucleolus. In terms of biological role, nucleolar protein that acts as a regulator of RNA polymerase I by connecting RNA polymerase I with enzymes responsible for ribosomal processing and modification. Required for neural crest specification: following monoubiquitination by the BCR(KBTBD8) complex, associates with TCOF1 and acts as a platform to connect RNA polymerase I with enzymes responsible for ribosomal processing and modification, leading to remodel the translational program of differentiating cells in favor of neural crest specification. Involved in nucleologenesis, possibly by playing a role in the maintenance of the fundamental structure of the fibrillar center and dense fibrillar component in the nucleolus. It has intrinsic GTPase and ATPase activities. The sequence is that of Nucleolar and coiled-body phosphoprotein 1 from Rattus norvegicus (Rat).